Reading from the N-terminus, the 651-residue chain is Acetyl-coenzyme A synthetase (651 aa).

CoA is bound by residues 189–192 (RGGK), threonine 311, and asparagine 335. Residues 387–389 (GEP), 411–416 (DTWWQT), aspartate 500, and arginine 515 each bind ATP. Serine 523 contributes to the CoA binding site. An ATP-binding site is contributed by arginine 526. The Mg(2+) site is built by valine 537, histidine 539, and valine 542. Arginine 586 lines the CoA pocket. Residue lysine 611 is modified to N6-acetyllysine.

Belongs to the ATP-dependent AMP-binding enzyme family. The cofactor is Mg(2+). Post-translationally, acetylated. Deacetylation by the SIR2-homolog deacetylase activates the enzyme.

It carries out the reaction acetate + ATP + CoA = acetyl-CoA + AMP + diphosphate. Catalyzes the conversion of acetate into acetyl-CoA (AcCoA), an essential intermediate at the junction of anabolic and catabolic pathways. AcsA undergoes a two-step reaction. In the first half reaction, AcsA combines acetate with ATP to form acetyl-adenylate (AcAMP) intermediate. In the second half reaction, it can then transfer the acetyl group from AcAMP to the sulfhydryl group of CoA, forming the product AcCoA. The polypeptide is Acetyl-coenzyme A synthetase (Brucella anthropi (strain ATCC 49188 / DSM 6882 / CCUG 24695 / JCM 21032 / LMG 3331 / NBRC 15819 / NCTC 12168 / Alc 37) (Ochrobactrum anthropi)).